The chain runs to 613 residues: Putative two-component response regulator ARR21 (613 aa).

Positions 17–131 (NVMVVDDDHV…DLTKIYQFAL (115 aa)) constitute a Response regulatory domain. Asp-68 is modified (4-aspartylphosphate). The span at 178–195 (KSDSRTVNSTNGSCVSTD) shows a compositional bias: polar residues. The segment at 178 to 223 (KSDSRTVNSTNGSCVSTDGSRKNRKRKPNGGPSDDGESMSQPAKKK) is disordered. The Nuclear localization signal motif lies at 221–224 (KKKK). Residues 224–274 (KIQWTDSLHDLFLQAIRHIGLDKAVPKKILAFMSVPYLTRENVASHLQKYR) constitute a DNA-binding region (myb-like GARP).

It belongs to the ARR family. Type-B subfamily. As to quaternary structure, binds the target DNA as a monomer. Post-translationally, two-component system major event consists of a His-to-Asp phosphorelay between a sensor histidine kinase (HK) and a response regulator (RR). In plants, the His-to-Asp phosphorelay involves an additional intermediate named Histidine-containing phosphotransfer protein (HPt). This multistep phosphorelay consists of a His-Asp-His-Asp sequential transfer of a phosphate group between first a His and an Asp of the HK protein, followed by the transfer to a conserved His of the HPt protein and finally the transfer to an Asp in the receiver domain of the RR protein. In terms of tissue distribution, mainly expressed in siliques. Also found in germinating seedlings, stems, flowers and roots, but not in rosette leaves.

It localises to the nucleus. In terms of biological role, putative transcriptional activator that binds specifically to the DNA sequence 5'-[AG]GATT-3'. Functions as a response regulator involved in His-to-Asp phosphorelay signal transduction system. Phosphorylation of the Asp residue in the receiver domain activates the ability of the protein to promote the transcription of target genes. Could directly activate some type-A response regulators in response to cytokinins. This Arabidopsis thaliana (Mouse-ear cress) protein is Putative two-component response regulator ARR21 (ARR21).